Reading from the N-terminus, the 450-residue chain is Tubulin alpha-2 chain (450 aa).

Positions 11, 71, 144, 145, 179, 206, and 228 each coordinate GTP. Mg(2+) is bound at residue Glu-71. The active site involves Glu-254. Thr-349 carries the post-translational modification Phosphothreonine. The tract at residues 430 to 450 is disordered; sequence KDYEEVGAEGGDDEDDEGEEY. Over residues 431–450 the composition is skewed to acidic residues; that stretch reads DYEEVGAEGGDDEDDEGEEY.

This sequence belongs to the tubulin family. As to quaternary structure, dimer of alpha and beta chains. A typical microtubule is a hollow water-filled tube with an outer diameter of 25 nm and an inner diameter of 15 nM. Alpha-beta heterodimers associate head-to-tail to form protofilaments running lengthwise along the microtubule wall with the beta-tubulin subunit facing the microtubule plus end conferring a structural polarity. Microtubules usually have 13 protofilaments but different protofilament numbers can be found in some organisms and specialized cells. It depends on Mg(2+) as a cofactor. Undergoes a tyrosination/detyrosination cycle, the cyclic removal and re-addition of a C-terminal tyrosine residue by the enzymes tubulin tyrosine carboxypeptidase (TTCP) and tubulin tyrosine ligase (TTL), respectively. Post-translationally, acetylation of alpha chains at Lys-40 stabilizes microtubules and affects affinity and processivity of microtubule motors. This modification has a role in multiple cellular functions, ranging from cell motility, cell cycle progression or cell differentiation to intracellular trafficking and signaling.

It is found in the cytoplasm. Its subcellular location is the cytoskeleton. The enzyme catalyses GTP + H2O = GDP + phosphate + H(+). Functionally, tubulin is the major constituent of microtubules, a cylinder consisting of laterally associated linear protofilaments composed of alpha- and beta-tubulin heterodimers. Microtubules grow by the addition of GTP-tubulin dimers to the microtubule end, where a stabilizing cap forms. Below the cap, tubulin dimers are in GDP-bound state, owing to GTPase activity of alpha-tubulin. The protein is Tubulin alpha-2 chain (TUBA2) of Arabidopsis thaliana (Mouse-ear cress).